The sequence spans 145 residues: Deoxyuridine 5'-triphosphate nucleotidohydrolase (145 aa).

Residues 65 to 67 (RSG), Asn78, and 82 to 84 (TID) contribute to the substrate site.

Belongs to the dUTPase family. Mg(2+) serves as cofactor.

The catalysed reaction is dUTP + H2O = dUMP + diphosphate + H(+). It functions in the pathway pyrimidine metabolism; dUMP biosynthesis; dUMP from dCTP (dUTP route): step 2/2. Its function is as follows. This enzyme is involved in nucleotide metabolism: it produces dUMP, the immediate precursor of thymidine nucleotides and it decreases the intracellular concentration of dUTP so that uracil cannot be incorporated into DNA. This is Deoxyuridine 5'-triphosphate nucleotidohydrolase from Clostridium tetani (strain Massachusetts / E88).